A 518-amino-acid polypeptide reads, in one-letter code: MDESSIIPAEKVAGAEKKELQGLLKTAVQSVDWTYSVFWQFCPQQRVLVWGNGYYNGAIKTRKTTQPAEVTAEEAALERSQQLRELYETLLAGESTSEARACTALSPEDLTETEWFYLMCVSFSFPPPSGMPGKAYARRKHVWLSGANEVDSKTFSRAILAKSAKIQTVVCIPMLDGVVELGTTKKVREDVEFVELTKSFFYDHCKTNPKPALSEHSTYEVHEEAEDEEEVEEEMTMSEEMRLGSPDDEDVSNQNLHSDLHIESTHTLDTHMDMMNLMEEGGNYSQTVTTLLMSHPTSLLSDSVSTSSYIQSSFATWRVENGKEHQQVKTAPSSQWVLKQMIFRVPFLHDNTKDKRLPREDLSHVVAERRRREKLNEKFITLRSMVPFVTKMDKVSILGDTIAYVNHLRKRVHELENTHHEQQHKRTRTCKRKTSEEVEVSIIENDVLLEMRCEYRDGLLLDILQVLHELGIETTAVHTSVNDHDFEAEIRAKVRGKKASIAEVKRAIHQVIIHDTNL.

2 coiled-coil regions span residues Glu220–Glu240 and Val405–Arg428. Residues Arg359–Leu408 form the bHLH domain.

It belongs to the bHLH protein family. Homodimer. Interacts with MYB4, MYB5, MYB6, MYB82, MYB113, MYB114, MYB75/PAP1, MYB90/PAP2, and TT2. Buds, flowers and developing siliques, but not in leaves, stems and roots.

The protein localises to the nucleus. In terms of biological role, transcription activator, when associated with MYB75/PAP1 or MYB90/PAP2. Involved in the control of flavonoid pigmentation. Plays a key role in regulating leucoanthocyanidin reductase (BANYULS) and dihydroflavonol-4-reductase (DFR). Not required for leucoanthocyanidin dioxygenase (LDOX) expression. In Arabidopsis thaliana (Mouse-ear cress), this protein is Transcription factor TT8.